A 168-amino-acid chain; its full sequence is Crossover junction endodeoxyribonuclease RuvC (168 aa).

Catalysis depends on residues Asp-8, Glu-68, and Asp-140. Asp-8, Glu-68, and Asp-140 together coordinate Mg(2+).

It belongs to the RuvC family. In terms of assembly, homodimer which binds Holliday junction (HJ) DNA. The HJ becomes 2-fold symmetrical on binding to RuvC with unstacked arms; it has a different conformation from HJ DNA in complex with RuvA. In the full resolvosome a probable DNA-RuvA(4)-RuvB(12)-RuvC(2) complex forms which resolves the HJ. Mg(2+) is required as a cofactor.

It localises to the cytoplasm. The catalysed reaction is Endonucleolytic cleavage at a junction such as a reciprocal single-stranded crossover between two homologous DNA duplexes (Holliday junction).. In terms of biological role, the RuvA-RuvB-RuvC complex processes Holliday junction (HJ) DNA during genetic recombination and DNA repair. Endonuclease that resolves HJ intermediates. Cleaves cruciform DNA by making single-stranded nicks across the HJ at symmetrical positions within the homologous arms, yielding a 5'-phosphate and a 3'-hydroxyl group; requires a central core of homology in the junction. The consensus cleavage sequence is 5'-(A/T)TT(C/G)-3'. Cleavage occurs on the 3'-side of the TT dinucleotide at the point of strand exchange. HJ branch migration catalyzed by RuvA-RuvB allows RuvC to scan DNA until it finds its consensus sequence, where it cleaves and resolves the cruciform DNA. This Lawsonia intracellularis (strain PHE/MN1-00) protein is Crossover junction endodeoxyribonuclease RuvC.